Here is a 184-residue protein sequence, read N- to C-terminus: Peptide deformylase (184 aa).

2 residues coordinate Fe cation: C98 and H140. Residue E141 is part of the active site. H144 contributes to the Fe cation binding site.

Belongs to the polypeptide deformylase family. Fe(2+) serves as cofactor.

The catalysed reaction is N-terminal N-formyl-L-methionyl-[peptide] + H2O = N-terminal L-methionyl-[peptide] + formate. Functionally, removes the formyl group from the N-terminal Met of newly synthesized proteins. Requires at least a dipeptide for an efficient rate of reaction. N-terminal L-methionine is a prerequisite for activity but the enzyme has broad specificity at other positions. The sequence is that of Peptide deformylase from Phocaeicola vulgatus (strain ATCC 8482 / DSM 1447 / JCM 5826 / CCUG 4940 / NBRC 14291 / NCTC 11154) (Bacteroides vulgatus).